The following is a 300-amino-acid chain: ETS homologous factor (300 aa).

Residues 29–115 form the PNT domain; it reads STCNVSSGFF…SNLQHLKWNG (87 aa). The tract at residues 183–202 is disordered; the sequence is ESPDMKKEQDPPAKCHTKKH. Positions 185–195 are enriched in basic and acidic residues; that stretch reads PDMKKEQDPPA. The segment at residues 207–289 is a DNA-binding region (ETS); the sequence is THLWEFIRDI…DGRRLVYKFG (83 aa).

It belongs to the ETS family.

The protein resides in the nucleus. Transcriptional activator that may play a role in regulating epithelial cell differentiation and proliferation. May act as a repressor for a specific subset of ETS/AP-1-responsive genes, and as a modulator of the nuclear response to mitogen-activated protein kinase signaling cascades. Binds to DNA sequences containing the consensus nucleotide core sequence GGAA. Involved in regulation of TNFRSF10B/DR5 expression through Ets-binding sequences on the TNFRSF10B/DR5 promoter. This is ETS homologous factor (EHF) from Pan troglodytes (Chimpanzee).